A 244-amino-acid chain; its full sequence is Cell division protein ZapD (244 aa).

It belongs to the ZapD family. In terms of assembly, interacts with FtsZ.

Its subcellular location is the cytoplasm. Cell division factor that enhances FtsZ-ring assembly. Directly interacts with FtsZ and promotes bundling of FtsZ protofilaments, with a reduction in FtsZ GTPase activity. The polypeptide is Cell division protein ZapD (Shewanella baltica (strain OS185)).